A 117-amino-acid polypeptide reads, in one-letter code: Bomanin Bicipital 1 (117 aa).

Residues 1–20 (MKCLILSFAIFVVLASQATA) form the signal peptide. 2 cysteine pairs are disulfide-bonded: cysteine 29–cysteine 32 and cysteine 107–cysteine 110.

Belongs to the bomanin family. Hemolymph (at protein level).

It is found in the secreted. Its function is as follows. Secreted immune-induced peptide induced by Toll signaling. Has a role in resistance to bacterial and fungal infections. This chain is Bomanin Bicipital 1, found in Drosophila melanogaster (Fruit fly).